Here is a 363-residue protein sequence, read N- to C-terminus: Putative RAD2-like endonuclease 095R (363 aa).

It belongs to the XPG/RAD2 endonuclease family. Requires Mg(2+) as cofactor.

The protein localises to the host nucleus. Functionally, probable endonuclease. The chain is Putative RAD2-like endonuclease 095R from Frog virus 3 (isolate Goorha) (FV-3).